The chain runs to 485 residues: Probable high-affinity nitrate transporter 2.4 (485 aa).

The next 12 membrane-spanning stretches (helical) occupy residues 56-76 (WMSL…LPAM), 80-100 (LVLA…ATLV), 119-139 (GVAS…ASSP), 147-167 (FVAG…SRIF), 177-197 (AVAA…MPVA), 215-235 (VTYL…LAFP), 270-290 (AWLL…MENV), 305-327 (AAGA…GGVA), 341-361 (LWAL…VGRM), 377-397 (VACA…VPFV), 405-425 (VSGM…RLFF), and 435-455 (AISC…LIHF).

Belongs to the major facilitator superfamily. Nitrate/nitrite porter (TC 2.A.1.8) family. Expressed in the base of the lateral root primordia, root-shoot junction zone, leaves, ends of the husk and vascular tissue of the anthers.

It localises to the cell membrane. Its function is as follows. Involved in nitrate transport. The sequence is that of Probable high-affinity nitrate transporter 2.4 (NRT2.4) from Oryza sativa subsp. japonica (Rice).